A 334-amino-acid chain; its full sequence is MNMIKIEPYIPTDISIEEISTNRIRISAYPFESGYAITLAHPIRRLLLSSSVGYAPTALRIQGVTHEFDSIRGIVEDVSHFITNLKNIRFLIKDTESDNVQLHYEFKGPMVLSANELVNDMVGIVNPEAYLATINENASLSFSLIVQKGIGYVPSESIRGKISEDYIPLDAYFTPVKKAVYEIENVLVEDNPNYEKIVFDIETDGQIEPITAFKEAIAIMHKQMSIFGVDLSTASSGTRNISEDSGELKTLMIKIDTLNLSARCFNCLDRSGLKYVGELVIMSENELKNIKNMGKKSYDEIADKLEELGYPVGGEIADDILPLLNRKLAKLKSN.

The tract at residues 1 to 231 (MNMIKIEPYI…KQMSIFGVDL (231 aa)) is alpha N-terminal domain (alpha-NTD). Positions 247-334 (ELKTLMIKID…NRKLAKLKSN (88 aa)) are alpha C-terminal domain (alpha-CTD).

Belongs to the RNA polymerase alpha chain family. In terms of assembly, homodimer. The RNAP catalytic core consists of 2 alpha, 1 beta/beta' and 1 omega subunit. When a sigma factor is associated with the core the holoenzyme is formed, which can initiate transcription.

The catalysed reaction is RNA(n) + a ribonucleoside 5'-triphosphate = RNA(n+1) + diphosphate. DNA-dependent RNA polymerase catalyzes the transcription of DNA into RNA using the four ribonucleoside triphosphates as substrates. This Helicobacter hepaticus (strain ATCC 51449 / 3B1) protein is DNA-directed RNA polymerase subunit alpha.